The following is a 151-amino-acid chain: Transcriptional repressor NrdR (151 aa).

A zinc finger lies at 3–34; the sequence is CPYCGYIEDRVIDSRPTDEGSAIRRRRECSKC. One can recognise an ATP-cone domain in the interval 49–139; sequence IMVIKKDKSR…VYRQFKDINT (91 aa).

This sequence belongs to the NrdR family. The cofactor is Zn(2+).

In terms of biological role, negatively regulates transcription of bacterial ribonucleotide reductase nrd genes and operons by binding to NrdR-boxes. This is Transcriptional repressor NrdR from Acetivibrio thermocellus (strain ATCC 27405 / DSM 1237 / JCM 9322 / NBRC 103400 / NCIMB 10682 / NRRL B-4536 / VPI 7372) (Clostridium thermocellum).